The sequence spans 555 residues: Esterase-5A (555 aa).

The signal sequence occupies residues 1–19; it reads MHLVRWLICLIQLWIQLGA. Cys-87 and Cys-106 are disulfide-bonded. N-linked (GlcNAc...) asparagine glycosylation is found at Asn-95 and Asn-116. Ser-210 acts as the Acyl-ester intermediate in catalysis. A disulfide bridge connects residues Cys-262 and Cys-274. Asn-479 and Asn-510 each carry an N-linked (GlcNAc...) asparagine glycan. Cysteines 518 and 539 form a disulfide.

The protein belongs to the type-B carboxylesterase/lipase family.

The protein resides in the secreted. It carries out the reaction a carboxylic ester + H2O = an alcohol + a carboxylate + H(+). The protein is Esterase-5A (Est-5A) of Drosophila miranda (Fruit fly).